We begin with the raw amino-acid sequence, 96 residues long: Large ribosomal subunit protein bL28 (96 aa).

This sequence belongs to the bacterial ribosomal protein bL28 family.

This chain is Large ribosomal subunit protein bL28, found in Parvibaculum lavamentivorans (strain DS-1 / DSM 13023 / NCIMB 13966).